The primary structure comprises 476 residues: uncharacterized protein (476 aa).

The LisH domain occupies 7–39; sequence SRFYTNLLIANYLKHNGLEDTLAAFIRETALPL.

This is an uncharacterized protein from Saccharomyces cerevisiae (strain ATCC 204508 / S288c) (Baker's yeast).